The sequence spans 120 residues: Large ribosomal subunit protein uL18 (120 aa).

Belongs to the universal ribosomal protein uL18 family. In terms of assembly, part of the 50S ribosomal subunit; part of the 5S rRNA/L5/L18/L25 subcomplex. Contacts the 5S and 23S rRNAs.

Its function is as follows. This is one of the proteins that bind and probably mediate the attachment of the 5S RNA into the large ribosomal subunit, where it forms part of the central protuberance. The chain is Large ribosomal subunit protein uL18 from Treponema pallidum (strain Nichols).